The chain runs to 117 residues: Large ribosomal subunit protein bL17 (117 aa).

It belongs to the bacterial ribosomal protein bL17 family. As to quaternary structure, part of the 50S ribosomal subunit. Contacts protein L32.

The polypeptide is Large ribosomal subunit protein bL17 (Campylobacter jejuni subsp. doylei (strain ATCC BAA-1458 / RM4099 / 269.97)).